The primary structure comprises 670 residues: Tyramine beta-hydroxylase (670 aa).

Positions 26–35 are enriched in basic residues; the sequence is HHQLAYHHHK. The disordered stretch occupies residues 26 to 63; that stretch reads HHQLAYHHHKQEQQQQQQQQQQQQAKQKQKQNGVQQGR. Residues 38–61 show a composition bias toward low complexity; sequence QQQQQQQQQQQQAKQKQKQNGVQQ. Residues 65–81 form a helical membrane-spanning segment; the sequence is PTFMPVMLLLLMATLLT. The DOMON domain maps to 104 to 220; the sequence is KEIKLSWMVD…GTMYVVWARG (117 aa). N-linked (GlcNAc...) asparagine glycosylation is present at Asn235. Tyr281 is a catalytic residue. Intrachain disulfides connect Cys283/Cys334 and Cys319/Cys344. Cu(2+) contacts are provided by His312 and His313. The Cu(2+) site is built by His382, His461, His463, and Met536. 3 disulfide bridges follow: Cys439–Cys552, Cys443–Cys613, and Cys515–Cys537. His461 is a catalytic residue. A glycan (N-linked (GlcNAc...) asparagine) is linked at Asn614.

The protein belongs to the copper type II ascorbate-dependent monooxygenase family. In terms of assembly, is most likely a monomer under physiological conditions, although under conditions of high pH and low ionic strength the dimeric form predominates. Both forms are equally active. It depends on Cu(2+) as a cofactor. As to expression, present in head and in neurons innervating the oviduct (at protein level).

The protein resides in the membrane. The enzyme catalyses tyramine + L-ascorbate + O2 = (R)-octopamine + L-dehydroascorbate + H2O. In terms of biological role, catalyzes the hydroxylation of tyramine into octopamine, a neurotransmitter involved in ovulation and locomotion. Functions in an amine-mediated Bacc-dependent signaling pathway that negatively regulates acute ethanol sensitivity. Involved in facilitation of nociceptive escape behavior in response to potentially damaging stimuli, such as high temperatures. The chain is Tyramine beta-hydroxylase (Tbh) from Drosophila melanogaster (Fruit fly).